The chain runs to 237 residues: 4-hydroxy-tetrahydrodipicolinate reductase (237 aa).

NAD(+) contacts are provided by residues 11–16, 92–94, and 116–119; these read GASGRM, GTT, and GSNF. The active-site Proton donor/acceptor is His148. His149 contacts (S)-2,3,4,5-tetrahydrodipicolinate. Lys152 serves as the catalytic Proton donor. 158–159 provides a ligand contact to (S)-2,3,4,5-tetrahydrodipicolinate; the sequence is GS.

Belongs to the DapB family.

It localises to the cytoplasm. The enzyme catalyses (S)-2,3,4,5-tetrahydrodipicolinate + NAD(+) + H2O = (2S,4S)-4-hydroxy-2,3,4,5-tetrahydrodipicolinate + NADH + H(+). The catalysed reaction is (S)-2,3,4,5-tetrahydrodipicolinate + NADP(+) + H2O = (2S,4S)-4-hydroxy-2,3,4,5-tetrahydrodipicolinate + NADPH + H(+). Its pathway is amino-acid biosynthesis; L-lysine biosynthesis via DAP pathway; (S)-tetrahydrodipicolinate from L-aspartate: step 4/4. Functionally, catalyzes the conversion of 4-hydroxy-tetrahydrodipicolinate (HTPA) to tetrahydrodipicolinate. In Xylella fastidiosa (strain 9a5c), this protein is 4-hydroxy-tetrahydrodipicolinate reductase.